A 162-amino-acid chain; its full sequence is NADH-quinone oxidoreductase subunit I 2 (162 aa).

2 consecutive 4Fe-4S ferredoxin-type domains span residues 52–82 (LRRY…IEAG) and 93–122 (VRYD…EGPN). Positions 62, 65, 68, 72, 102, 105, 108, and 112 each coordinate [4Fe-4S] cluster.

It belongs to the complex I 23 kDa subunit family. As to quaternary structure, NDH-1 is composed of 14 different subunits. Subunits NuoA, H, J, K, L, M, N constitute the membrane sector of the complex. [4Fe-4S] cluster serves as cofactor.

The protein resides in the cell inner membrane. It catalyses the reaction a quinone + NADH + 5 H(+)(in) = a quinol + NAD(+) + 4 H(+)(out). In terms of biological role, NDH-1 shuttles electrons from NADH, via FMN and iron-sulfur (Fe-S) centers, to quinones in the respiratory chain. The immediate electron acceptor for the enzyme in this species is believed to be ubiquinone. Couples the redox reaction to proton translocation (for every two electrons transferred, four hydrogen ions are translocated across the cytoplasmic membrane), and thus conserves the redox energy in a proton gradient. In Rhodopseudomonas palustris (strain HaA2), this protein is NADH-quinone oxidoreductase subunit I 2.